Reading from the N-terminus, the 598-residue chain is Elongation factor 4 (598 aa).

Positions 2–184 constitute a tr-type G domain; the sequence is NNIRNFAIIA…AIVTKLPAPQ (183 aa). GTP contacts are provided by residues 14–19 and 131–134; these read DHGKST and NKVD.

Belongs to the TRAFAC class translation factor GTPase superfamily. Classic translation factor GTPase family. LepA subfamily.

It localises to the cell membrane. It carries out the reaction GTP + H2O = GDP + phosphate + H(+). Its function is as follows. Required for accurate and efficient protein synthesis under certain stress conditions. May act as a fidelity factor of the translation reaction, by catalyzing a one-codon backward translocation of tRNAs on improperly translocated ribosomes. Back-translocation proceeds from a post-translocation (POST) complex to a pre-translocation (PRE) complex, thus giving elongation factor G a second chance to translocate the tRNAs correctly. Binds to ribosomes in a GTP-dependent manner. The sequence is that of Elongation factor 4 from Wolbachia pipientis subsp. Culex pipiens (strain wPip).